Consider the following 157-residue polypeptide: Ribosome maturation factor RimP (157 aa).

This sequence belongs to the RimP family.

The protein resides in the cytoplasm. Its function is as follows. Required for maturation of 30S ribosomal subunits. The polypeptide is Ribosome maturation factor RimP (Thermus thermophilus (strain ATCC BAA-163 / DSM 7039 / HB27)).